Here is a 512-residue protein sequence, read N- to C-terminus: Choline-sulfatase (512 aa).

Ca(2+)-binding residues include Asp14, Gln15, and Cys54. Cys54 (nucleophile) is an active-site residue. Residue Cys54 is modified to 3-oxoalanine (Cys). Residue His104 is part of the active site. Residues Asp296 and His297 each coordinate Ca(2+).

This sequence belongs to the sulfatase family. Ca(2+) is required as a cofactor. In terms of processing, the conversion to 3-oxoalanine (also known as C-formylglycine, FGly), of a serine or cysteine residue in prokaryotes and of a cysteine residue in eukaryotes, is critical for catalytic activity.

The catalysed reaction is choline sulfate + H2O = choline + sulfate + H(+). The protein operates within amine and polyamine biosynthesis; choline biosynthesis; choline from choline sulfate: step 1/1. Its function is as follows. Converts choline-O-sulfate into choline. This chain is Choline-sulfatase (betC), found in Rhizobium meliloti (strain 1021) (Ensifer meliloti).